The primary structure comprises 183 residues: Deoxyuridine 5'-triphosphate nucleotidohydrolase (183 aa).

Substrate is bound by residues 67-69 (RSG), asparagine 80, 84-86 (TID), and lysine 94. The tract at residues 138–183 (RAEGGFGSTGGHAGLDPASGTSGQVAEGGPTGGNRYASVVSDREGQ) is disordered. The span at 141 to 150 (GGFGSTGGHA) shows a compositional bias: gly residues.

It belongs to the dUTPase family. The cofactor is Mg(2+).

The enzyme catalyses dUTP + H2O = dUMP + diphosphate + H(+). Its pathway is pyrimidine metabolism; dUMP biosynthesis; dUMP from dCTP (dUTP route): step 2/2. In terms of biological role, this enzyme is involved in nucleotide metabolism: it produces dUMP, the immediate precursor of thymidine nucleotides and it decreases the intracellular concentration of dUTP so that uracil cannot be incorporated into DNA. In Streptomyces coelicolor (strain ATCC BAA-471 / A3(2) / M145), this protein is Deoxyuridine 5'-triphosphate nucleotidohydrolase.